A 357-amino-acid polypeptide reads, in one-letter code: MQILEEKPKEGKVKVKAETLDDLWHLYHIIDPGDIVYAKTLRKQAQRADSLRAEKVEVIPVFLGVQAEKINFHKFANQVRVTGPIVYASREDVPLGKYHTIAIEQGTVVTIQKPRWKEHHIERLKEAVAASKRARVMIVVIDDGEADMALVREYGVEILNSIRHNLGGKRYNTDRESEEMKFFHDVAKTMEEVMKRENVEKAIVAGPGFVKEDFYKFLKEKYPELAKKVVIEDTSVTGRTGIYEVIKRGVVDRVYQENRVAKEVQLVEKVLENIARNNGLVAYGLKEVEEAVNYGAVETLLVLDELLKGELREKVEELMDAVRYSRGEVVVVSSEHEGGEKLKALGGLAALLRFRVK.

This sequence belongs to the eukaryotic release factor 1 family. Pelota subfamily. As to quaternary structure, monomer. Requires a divalent metal cation as cofactor.

The protein resides in the cytoplasm. Functionally, may function in recognizing stalled ribosomes, interact with stem-loop structures in stalled mRNA molecules, and effect endonucleolytic cleavage of the mRNA. May play a role in the release non-functional ribosomes and degradation of damaged mRNAs. Has endoribonuclease activity. This Thermococcus kodakarensis (strain ATCC BAA-918 / JCM 12380 / KOD1) (Pyrococcus kodakaraensis (strain KOD1)) protein is Protein pelota homolog.